The primary structure comprises 120 residues: Small ribosomal subunit protein bS6 (120 aa).

Residues 93 to 120 (KKADTAPSSMMKTVEREEARKASQTEQA) are disordered. Residues 105-120 (TVEREEARKASQTEQA) show a composition bias toward basic and acidic residues.

Belongs to the bacterial ribosomal protein bS6 family.

Binds together with bS18 to 16S ribosomal RNA. The sequence is that of Small ribosomal subunit protein bS6 from Delftia acidovorans (strain DSM 14801 / SPH-1).